We begin with the raw amino-acid sequence, 152 residues long: Snaclec coagulation factor IX/factor X-binding protein subunit A (152 aa).

The signal sequence occupies residues 1–23; that stretch reads MGRFIFVSFGLLVVAASLSGTGA. Intrachain disulfides connect Cys25–Cys36, Cys53–Cys150, and Cys125–Cys142. The C-type lectin domain occupies 32–151; it reads YEGHCYKAFE…CGQRIPFVCE (120 aa). 3 residues coordinate Ca(2+): Ser64, Glu66, and Glu70. Position 151 (Glu151) interacts with Ca(2+).

Belongs to the snaclec family. Heterodimer of subunits A and B; disulfide-linked. In terms of tissue distribution, expressed by the venom gland.

Its subcellular location is the secreted. Anticoagulant protein which binds to the gamma-carboxyglutamic acid-domain regions of factors IX (F9) and factor X (F10) in the presence of calcium with a 1 to 1 stoichiometry. This is Snaclec coagulation factor IX/factor X-binding protein subunit A from Trimeresurus stejnegeri (Chinese green tree viper).